The primary structure comprises 320 residues: Taste receptor type 2 member 109 (320 aa).

At 1 to 14 the chain is on the extracellular side; that stretch reads MEHFLKSIFDISKN. Residues 15 to 35 traverse the membrane as a helical segment; it reads VLPIILFIELIIGIIGNGFMA. Over 36-62 the chain is Cytoplasmic; that stretch reads LVHCMDWVKRKKMSLVNQILTTLATSR. Residues 63 to 83 form a helical membrane-spanning segment; that stretch reads ICLLWFMLLGLLITLLDPDLA. Over 84 to 94 the chain is Extracellular; the sequence is SARMMIQVASN. A helical membrane pass occupies residues 95–115; sequence LWIIANHMSIWLATCLTVFYF. At 116–135 the chain is on the cytoplasmic side; sequence LKIANFSSSLFLYLKWRVEK. A helical membrane pass occupies residues 136-156; it reads VISVIFLVSLVLLFLNMLLMN. Topologically, residues 157 to 191 are extracellular; sequence LENDMCIAEYHQINISYSFIYHYRADCERRVLRLH. A glycan (N-linked (GlcNAc...) asparagine) is linked at Asn-170. The chain crosses the membrane as a helical span at residues 192-212; the sequence is IIILSVPFVLSLPTFLLLIFS. Topologically, residues 213–240 are cytoplasmic; it reads LWTHHKKMQQHVQGRRDASTTAHFKALQ. Residues 241-261 traverse the membrane as a helical segment; it reads TVIAFLLLYCIFILSMLLQFW. Topologically, residues 262–270 are extracellular; that stretch reads KYELMKKPL. Residues 271–291 traverse the membrane as a helical segment; that stretch reads FILFCHIVYGAFPSFHSYVLI. At 292 to 320 the chain is on the cytoplasmic side; sequence LGDMKLRQASLSVLLWLKCRPNYIETLDL.

It belongs to the G-protein coupled receptor T2R family.

Its subcellular location is the membrane. Functionally, putative taste receptor which may play a role in the perception of bitterness. This Rattus norvegicus (Rat) protein is Taste receptor type 2 member 109.